A 229-amino-acid polypeptide reads, in one-letter code: Uracil-DNA glycosylase (229 aa).

Residue Asp70 is the Proton acceptor of the active site.

The protein belongs to the uracil-DNA glycosylase (UDG) superfamily. UNG family.

The protein resides in the cytoplasm. The enzyme catalyses Hydrolyzes single-stranded DNA or mismatched double-stranded DNA and polynucleotides, releasing free uracil.. Functionally, excises uracil residues from the DNA which can arise as a result of misincorporation of dUMP residues by DNA polymerase or due to deamination of cytosine. This chain is Uracil-DNA glycosylase, found in Chlamydia abortus (strain DSM 27085 / S26/3) (Chlamydophila abortus).